The following is a 317-amino-acid chain: Melanocyte-stimulating hormone receptor (317 aa).

Residues 1–37 (MAVQGSQRRLLGSLNSTPTAIPQLGLAANQTGAWCLE) are Extracellular-facing. N-linked (GlcNAc...) asparagine glycosylation occurs at asparagine 29. Residues 38 to 63 (VSIPDGLFLSLGLVSLVENVLVVATI) form a helical membrane-spanning segment. Residues 64 to 72 (AKNRNLHSP) lie on the Cytoplasmic side of the membrane. The chain crosses the membrane as a helical span at residues 73–93 (MYCFICCLALSDLLVSGGNVL). Topologically, residues 94–118 (ETAVILLLEAGALAARAAVVQQLDN) are extracellular. The helical transmembrane segment at 119-140 (VIDVITCSSMLSSLCFLGAIAV) threads the bilayer. Residues 141–163 (DRYISIFYALRYHSIVTLPRARR) lie on the Cytoplasmic side of the membrane. A helical transmembrane segment spans residues 164–183 (AIAAIWVASVLFSTLFIAYY). The Extracellular portion of the chain corresponds to 184-191 (DHAAVLLC). The chain crosses the membrane as a helical span at residues 192–211 (LVVFFLAMLVLMAVLYVHML). The Cytoplasmic segment spans residues 212 to 240 (ARACQHAQGIARLHKRQRPVHQGFGLKGA). The helical transmembrane segment at 241–266 (VTLTILLGIFFLCWGPFFLHLTLIVL) threads the bilayer. The Extracellular segment spans residues 267-279 (CPQHPTCSCIFKN). Residues 280 to 300 (FNLFLALIICNAIIDPLIYAF) traverse the membrane as a helical segment. Topologically, residues 301 to 317 (RSQELRRTLKEVLTCSW) are cytoplasmic. A lipid anchor (S-palmitoyl cysteine) is attached at cysteine 315.

Belongs to the G-protein coupled receptor 1 family. In terms of assembly, interacts with MGRN1, but does not undergo MGRN1-mediated ubiquitination; this interaction competes with GNAS-binding and thus inhibits agonist-induced cAMP production. Interacts with OPN3; the interaction results in a decrease in MC1R-mediated cAMP signaling and ultimately a decrease in melanin production in melanocytes.

The protein localises to the cell membrane. Functionally, receptor for MSH (alpha, beta and gamma) and ACTH. The activity of this receptor is mediated by G proteins which activate adenylate cyclase. Mediates melanogenesis, the production of eumelanin (black/brown) and phaeomelanin (red/yellow), via regulation of cAMP signaling in melanocytes. This Pongo pygmaeus (Bornean orangutan) protein is Melanocyte-stimulating hormone receptor (MC1R).